A 261-amino-acid polypeptide reads, in one-letter code: Thioesterase TesA (261 aa).

Residues 1–24 (MLARHGPRYGGSVNGHSDDSSGDA) are disordered. Active-site residues include Ser104, Asp208, and His236.

Belongs to the thioesterase family.

It catalyses the reaction a fatty acyl-CoA + H2O = a fatty acid + CoA + H(+). Involved in the synthesis of both phthiocerol dimycocerosates (PDIMs) and phenolic glycolipids (PGLs), which are structurally related lipids non-covalently bound to the outer cell wall layer of M.tuberculosis and are important virulence factors. This chain is Thioesterase TesA (tesA), found in Mycobacterium bovis (strain ATCC BAA-935 / AF2122/97).